Here is a 611-residue protein sequence, read N- to C-terminus: Chloroplast sensor kinase, chloroplastic (611 aa).

Residues 1–79 constitute a chloroplast transit peptide; sequence MLLSAIASQT…PGGGETMVAS (79 aa). The segment at 17-50 is disordered; it reads NLHFSNSIPNPRPSNPSLKLLNASSSSSSSSSSS. Over residues 40–50 the composition is skewed to low complexity; it reads SSSSSSSSSSS. The segment at 116-300 is GAF; that stretch reads DFQRLCLEQL…VMDQKTMLLQ (185 aa). Cys-121 contributes to the [3Fe-4S] cluster binding site. Residue Ser-188 is modified to Phosphoserine. Residues 312–602 enclose the Histidine kinase domain; the sequence is KLVEQIRGPL…RVELWLPAFP (291 aa). Residues 345 to 380 are a coiled coil; it reads VEDLIVQGDQIKDTLEELQDAVHLTKANIVRHNEEA. Residues 385–402 show a composition bias toward basic and acidic residues; it reads NKTHNETRRSKYEHKDPI. The segment at 385-420 is disordered; that stretch reads NKTHNETRRSKYEHKDPIDGSQISSTRLSLGSGLDD.

It belongs to the chloroplast sensor kinase protein family. Self-interacts. Interacts with the plastoquinone analog 2,5-dibromo-3-methyl-5-isopropyl-p-benzoquinone (DBMIB) and with SIGA/SIG1. Requires [3Fe-4S] cluster as cofactor. Autophosphorylated, possibly on tyrosine residues, in photosystem I (PS I) light and in the presence of manganese ions Mn(2+), to a lesser degree, in the presence of calcium ions Ca(2+), but not in the presence of magnesium ions Mg(2+). Dithiothreitol (DTT) stimulates autophosphorylation. Phosphorylated on Ser-188 in vivo after exposure to far-red light (when plastoquinone (PQ) is oxidized). Not phosphorylated under orange light (reduces PQ).

The protein localises to the plastid. The protein resides in the chloroplast stroma. It carries out the reaction L-tyrosyl-[protein] + ATP = O-phospho-L-tyrosyl-[protein] + ADP + H(+). In terms of biological role, sensor kinase that senses the plastoquinone (PQ) redox state involved in stoichiometry adjustment of both photosystems (e.g. long-term adaptation via transcriptional regulation of reaction center genes of photosystems I and II) and state transitions (e.g. short-term adaptation involving reversible post-translational phosphorylation of light-harvesting complex II, LHC II), thus linking photosynthesis with gene expression in chloroplasts. Autophosphorylates, probably on a tyrosine residue. Probably phosphorylates SIGA/SIG1 in response to plastoquinone redox state modification. Reduced PQ suppresses its autophosphorylation activity. Represses expression of a number of chloroplast-encoded genes. In Arabidopsis thaliana (Mouse-ear cress), this protein is Chloroplast sensor kinase, chloroplastic.